A 519-amino-acid chain; its full sequence is Maturase K (519 aa).

This sequence belongs to the intron maturase 2 family. MatK subfamily.

The protein resides in the plastid. It localises to the chloroplast. Functionally, usually encoded in the trnK tRNA gene intron. Probably assists in splicing its own and other chloroplast group II introns. The chain is Maturase K from Keteleeria davidiana (David's keteleeria).